Reading from the N-terminus, the 211-residue chain is Outer-membrane lipoprotein carrier protein (211 aa).

Positions 1–25 are cleaved as a signal peptide; it reads MRAIRMLLVSALTLGSLSATLSAHA.

This sequence belongs to the LolA family. In terms of assembly, monomer.

The protein localises to the periplasm. Participates in the translocation of lipoproteins from the inner membrane to the outer membrane. Only forms a complex with a lipoprotein if the residue after the N-terminal Cys is not an aspartate (The Asp acts as a targeting signal to indicate that the lipoprotein should stay in the inner membrane). In Pseudomonas putida (strain W619), this protein is Outer-membrane lipoprotein carrier protein.